A 344-amino-acid polypeptide reads, in one-letter code: tRNA N6-adenosine threonylcarbamoyltransferase (344 aa).

The Fe cation site is built by histidine 111 and histidine 115. Substrate contacts are provided by residues leucine 134–glycine 138, aspartate 167, glycine 180, and asparagine 277. Aspartate 305 contacts Fe cation.

Belongs to the KAE1 / TsaD family. It depends on Fe(2+) as a cofactor.

It localises to the cytoplasm. It catalyses the reaction L-threonylcarbamoyladenylate + adenosine(37) in tRNA = N(6)-L-threonylcarbamoyladenosine(37) in tRNA + AMP + H(+). Its function is as follows. Required for the formation of a threonylcarbamoyl group on adenosine at position 37 (t(6)A37) in tRNAs that read codons beginning with adenine. Is involved in the transfer of the threonylcarbamoyl moiety of threonylcarbamoyl-AMP (TC-AMP) to the N6 group of A37, together with TsaE and TsaB. TsaD likely plays a direct catalytic role in this reaction. This is tRNA N6-adenosine threonylcarbamoyltransferase from Glaesserella parasuis serovar 5 (strain SH0165) (Haemophilus parasuis).